The chain runs to 171 residues: Large ribosomal subunit protein bL17 (171 aa).

Positions Pro-130–Lys-171 are disordered. The span at Lys-133–Lys-149 shows a compositional bias: basic residues. The span at Ala-150–Ala-165 shows a compositional bias: low complexity.

It belongs to the bacterial ribosomal protein bL17 family. As to quaternary structure, part of the 50S ribosomal subunit. Contacts protein L32.

The sequence is that of Large ribosomal subunit protein bL17 from Opitutus terrae (strain DSM 11246 / JCM 15787 / PB90-1).